The sequence spans 366 residues: Holliday junction branch migration complex subunit RuvB (366 aa).

Residues 1-50 are disordered; that stretch reads MAIISSKKQPPEPNGEPKQRRESAKAPSTENILKPEAAIDEQEQQEEGIR. Positions 13-210 are large ATPase domain (RuvB-L); sequence PNGEPKQRRE…FGLIQKLRFY (198 aa). Basic and acidic residues predominate over residues 15–24; sequence GEPKQRRESA. ATP contacts are provided by residues Ile-49, Arg-50, Gly-91, Lys-94, Thr-95, Thr-96, 157-159, Arg-200, Tyr-210, and Arg-247; that span reads EDY. Thr-95 serves as a coordination point for Mg(2+). Positions 211–281 are small ATPAse domain (RuvB-S); that stretch reads EVDELTQIVL…IASEALQLFQ (71 aa). Residues 284–366 form a head domain (RuvB-H) region; it reads PCGLDWTDRQ…TPPNEQLSLL (83 aa). Arg-339 and Arg-344 together coordinate DNA.

It belongs to the RuvB family. As to quaternary structure, homohexamer. Forms an RuvA(8)-RuvB(12)-Holliday junction (HJ) complex. HJ DNA is sandwiched between 2 RuvA tetramers; dsDNA enters through RuvA and exits via RuvB. An RuvB hexamer assembles on each DNA strand where it exits the tetramer. Each RuvB hexamer is contacted by two RuvA subunits (via domain III) on 2 adjacent RuvB subunits; this complex drives branch migration. In the full resolvosome a probable DNA-RuvA(4)-RuvB(12)-RuvC(2) complex forms which resolves the HJ.

It localises to the cytoplasm. The enzyme catalyses ATP + H2O = ADP + phosphate + H(+). In terms of biological role, the RuvA-RuvB-RuvC complex processes Holliday junction (HJ) DNA during genetic recombination and DNA repair, while the RuvA-RuvB complex plays an important role in the rescue of blocked DNA replication forks via replication fork reversal (RFR). RuvA specifically binds to HJ cruciform DNA, conferring on it an open structure. The RuvB hexamer acts as an ATP-dependent pump, pulling dsDNA into and through the RuvAB complex. RuvB forms 2 homohexamers on either side of HJ DNA bound by 1 or 2 RuvA tetramers; 4 subunits per hexamer contact DNA at a time. Coordinated motions by a converter formed by DNA-disengaged RuvB subunits stimulates ATP hydrolysis and nucleotide exchange. Immobilization of the converter enables RuvB to convert the ATP-contained energy into a lever motion, pulling 2 nucleotides of DNA out of the RuvA tetramer per ATP hydrolyzed, thus driving DNA branch migration. The RuvB motors rotate together with the DNA substrate, which together with the progressing nucleotide cycle form the mechanistic basis for DNA recombination by continuous HJ branch migration. Branch migration allows RuvC to scan DNA until it finds its consensus sequence, where it cleaves and resolves cruciform DNA. This Nostoc punctiforme (strain ATCC 29133 / PCC 73102) protein is Holliday junction branch migration complex subunit RuvB.